A 436-amino-acid polypeptide reads, in one-letter code: Carboxypeptidase A5 (436 aa).

The first 33 residues, 1-33 (MQGTPGGGTRPGPSPVDRRTLLVFSFILAAALG), serve as a signal peptide directing secretion. The propeptide at 34–126 (QMNFTGDQVL…ERQAMAKSRR (93 aa)) is activation peptide. The Peptidase M14 domain maps to 138–431 (SYHTLEEIYS…MALRTIMEHT (294 aa)). Residues His-196 and Glu-199 each coordinate Zn(2+). Substrate-binding positions include 196-199 (HSRE), Arg-254, and 271-272 (NR). Cys-265 and Cys-288 form a disulfide bridge. His-323 contributes to the Zn(2+) binding site. Substrate is bound by residues 324–325 (SY) and Tyr-375. The active-site Proton donor/acceptor is Glu-397.

The protein belongs to the peptidase M14 family. Zn(2+) serves as cofactor. As to expression, expression is very low or not detectable.

It is found in the secreted. The sequence is that of Carboxypeptidase A5 (CPA5) from Homo sapiens (Human).